A 772-amino-acid polypeptide reads, in one-letter code: PDZ domain-containing protein 4 (772 aa).

A PDZ domain is found at 136–221; that stretch reads EVELCKNSHQ…NISLLVARPE (86 aa). Residues 239–320 form a disordered region; it reads DFGSENEGDL…TNTPGSLRKF (82 aa). Phosphoserine is present on serine 242. A compositionally biased stretch (basic and acidic residues) spans 287 to 303; it reads RTDESTRNEESSEHDLL. Positions 394-424 form a coiled coil; the sequence is VNRNESLGHEMAMLEEELRHLEFKCRNILRA. The segment at 450–573 is disordered; the sequence is ASEPKKHELS…VGPEGSPYLS (124 aa). Basic and acidic residues predominate over residues 452–472; it reads EPKKHELSDISELPEKSDKDS. Residue serine 459 is modified to Phosphoserine. Composition is skewed to polar residues over residues 473–484 and 502–511; these read TSAYNTGESCRS and AGNSNLNRTP. Over residues 535-552 the composition is skewed to basic and acidic residues; it reads LSRDPEVGRRQHTEERVR.

The protein resides in the cytoplasm. The protein localises to the cell cortex. This chain is PDZ domain-containing protein 4 (Pdzd4), found in Mus musculus (Mouse).